The following is a 420-amino-acid chain: Dynein axonemal assembly factor 4 (420 aa).

One can recognise a CS domain in the interval 3–87 (LQVSDYSWQQ…KEAAMWETLS (85 aa)). Residues 7–103 (DYSWQQTKTA…ETMQRIREKS (97 aa)) are mediates interaction with ESR1 and STUB1. TPR repeat units follow at residues 290 to 323 (PEWL…NNKM), 324 to 357 (PLLY…LMPP), and 366 to 399 (MKAH…DPSN).

As to quaternary structure, interacts with ZMYND10. Interacts with STUB1. Interacts with ESR1 and ESR2. Interacts with DNAAF2. Interacts with CCT3, CCT4, CCT5 and CCT8. Interacts with DNAAF6/PIH1D3.

Its subcellular location is the nucleus. It localises to the cytoplasm. The protein localises to the cell projection. The protein resides in the neuron projection. It is found in the dynein axonemal particle. Involved in neuronal migration during development of the cerebral neocortex. May regulate the stability and proteasomal degradation of the estrogen receptors that play an important role in neuronal differentiation, survival and plasticity. Axonemal dynein assembly factor required for ciliary motility. The chain is Dynein axonemal assembly factor 4 from Pongo pygmaeus (Bornean orangutan).